We begin with the raw amino-acid sequence, 75 residues long: Small integral membrane protein 7-A (75 aa).

Residues 1 to 17 (MIGDLLLFGTLLVNAGA) form the signal peptide. The Extracellular portion of the chain corresponds to 18 to 53 (VLNFKLKKKESQGFGDDLTEATTGDNIREFLLSLRY). A helical membrane pass occupies residues 54-74 (FRIFIALWNIFMMFCMIVLFG). Position 75 (serine 75) is a topological domain, cytoplasmic.

It belongs to the SMIM7 family.

It localises to the membrane. In Xenopus laevis (African clawed frog), this protein is Small integral membrane protein 7-A (smim7-a).